The primary structure comprises 372 residues: Cytochrome b (372 aa).

The next 4 membrane-spanning stretches (helical) occupy residues 25-45 (FGSM…FLAI), 69-90 (WTMQ…YIHI), 105-125 (WLSG…GYVL), and 170-190 (FFAL…IHII). His-75 and His-89 together coordinate heme b. The heme b site is built by His-174 and His-188. An a ubiquinone-binding site is contributed by His-193. Helical transmembrane passes span 218–238 (YKDM…LSFS), 280–300 (LGGT…PFTH), 312–332 (LTQI…WTAT), and 339–358 (FIII…IMNP).

It belongs to the cytochrome b family. In terms of assembly, the cytochrome bc1 complex contains 3 respiratory subunits (MT-CYB, CYC1 and UQCRFS1), 2 core proteins (UQCRC1 and UQCRC2) and probably 6 low-molecular weight proteins. Heme b serves as cofactor.

It is found in the mitochondrion inner membrane. Its function is as follows. Component of the ubiquinol-cytochrome c reductase complex (complex III or cytochrome b-c1 complex) that is part of the mitochondrial respiratory chain. The b-c1 complex mediates electron transfer from ubiquinol to cytochrome c. Contributes to the generation of a proton gradient across the mitochondrial membrane that is then used for ATP synthesis. The protein is Cytochrome b (MT-CYB) of Ophiophagus hannah (King cobra).